The sequence spans 127 residues: Holo-[acyl-carrier-protein] synthase (127 aa).

2 residues coordinate Mg(2+): Asp9 and Glu58.

This sequence belongs to the P-Pant transferase superfamily. AcpS family. Mg(2+) is required as a cofactor.

Its subcellular location is the cytoplasm. It catalyses the reaction apo-[ACP] + CoA = holo-[ACP] + adenosine 3',5'-bisphosphate + H(+). Transfers the 4'-phosphopantetheine moiety from coenzyme A to a Ser of acyl-carrier-protein. This is Holo-[acyl-carrier-protein] synthase from Shewanella baltica (strain OS223).